The chain runs to 244 residues: Putative lipoprotein LprA (244 aa).

The signal sequence occupies residues 1 to 24 (MKHPPCSVVAAATAILAVVLAIGG). C25 carries the N-palmitoyl cysteine lipid modification. Residue C25 is the site of S-diacylglycerol cysteine attachment.

Belongs to the LppX/LprAFG lipoprotein family.

Its subcellular location is the cell membrane. This is Putative lipoprotein LprA (lprA) from Mycobacterium tuberculosis (strain CDC 1551 / Oshkosh).